A 687-amino-acid chain; its full sequence is MADLLIELFSEEIPARMQARAGEDLKKRMTDGLVEAGLTYAGAHALTTPRRLTLAIEGLLDHSPTVREERKGPKVGAPEKAIEGFLRGAGLTRDQLEERDTPKGAVYFATIEKPGRPAAEIIAEVLEDTIRNFPWPKSMRWGAGALRWVRPLHSILCLLTREEGSEVVPLEIDGVTSGDSTAGHRFMAPARFAVTGFEDYAAKLKRAFVVLDPKEREAAIWQDATNQAFASGLEVVDDKGLLAEVAGLVEWPVVLMGSIDAEFLDLPPEVLQTSMKEHQKFFSVKNPKTGRIEKFITVANRETADNGATILAGNQKVLSARLADAKFFWENDLRIAKSEVGVEGWLESLGNVTFHNKLGTQAARIDRIAALAREIAPVVGADADLAEQAAKVAKADLSSEMVYEFPELQGLMGRYYAQAAGLPQEVANACELHYSPLGPSDDVPTEPVSVAVALADKIDTLTGFWAIDEKPTGSKDPYALRRAALGVIRLVLSNDVRVGLKEVFAKAYEGADGSDLLSFFHDRLKVFLRDQGIRHDVIDACIAMEGSDDLTLLVKRARALEDFMKSEDGENLLQGFKRANNILSQAEEKDGVEYSFGADKKFVEDPAEAALFEALAANEAAISTAIEAEDFAAAMGGMAALRAPVDAFFEAVQVNSDNPVVRRNRLNLLSQIRKVCGQVADLSRIEG.

The protein belongs to the class-II aminoacyl-tRNA synthetase family. In terms of assembly, tetramer of two alpha and two beta subunits.

Its subcellular location is the cytoplasm. The enzyme catalyses tRNA(Gly) + glycine + ATP = glycyl-tRNA(Gly) + AMP + diphosphate. This Ruegeria sp. (strain TM1040) (Silicibacter sp.) protein is Glycine--tRNA ligase beta subunit.